A 241-amino-acid polypeptide reads, in one-letter code: Triosephosphate isomerase (241 aa).

9-11 (NWK) serves as a coordination point for substrate. H88 acts as the Electrophile in catalysis. Catalysis depends on E158, which acts as the Proton acceptor. Residues G164, S203, and 224-225 (GG) each bind substrate.

This sequence belongs to the triosephosphate isomerase family. As to quaternary structure, homodimer.

Its subcellular location is the cytoplasm. The enzyme catalyses D-glyceraldehyde 3-phosphate = dihydroxyacetone phosphate. The protein operates within carbohydrate biosynthesis; gluconeogenesis. It participates in carbohydrate degradation; glycolysis; D-glyceraldehyde 3-phosphate from glycerone phosphate: step 1/1. Its function is as follows. Involved in the gluconeogenesis. Catalyzes stereospecifically the conversion of dihydroxyacetone phosphate (DHAP) to D-glyceraldehyde-3-phosphate (G3P). This Dichelobacter nodosus (strain VCS1703A) protein is Triosephosphate isomerase.